A 132-amino-acid chain; its full sequence is Large ribosomal subunit protein bL12 (132 aa).

Residues 112–132 (KEAADKAKTQLEGAGGTINLK) form a disordered region.

This sequence belongs to the bacterial ribosomal protein bL12 family. As to quaternary structure, homodimer. Part of the ribosomal stalk of the 50S ribosomal subunit. Forms a multimeric L10(L12)X complex, where L10 forms an elongated spine to which 2 to 4 L12 dimers bind in a sequential fashion. Binds GTP-bound translation factors.

Functionally, forms part of the ribosomal stalk which helps the ribosome interact with GTP-bound translation factors. Is thus essential for accurate translation. The chain is Large ribosomal subunit protein bL12 from Leifsonia xyli subsp. xyli (strain CTCB07).